The following is a 194-amino-acid chain: Large ribosomal subunit protein bL25 (194 aa).

This sequence belongs to the bacterial ribosomal protein bL25 family. CTC subfamily. Part of the 50S ribosomal subunit; part of the 5S rRNA/L5/L18/L25 subcomplex. Contacts the 5S rRNA. Binds to the 5S rRNA independently of L5 and L18.

Its function is as follows. This is one of the proteins that binds to the 5S RNA in the ribosome where it forms part of the central protuberance. The protein is Large ribosomal subunit protein bL25 of Thermobifida fusca (strain YX).